The chain runs to 379 residues: tRNA-specific 2-thiouridylase MnmA (379 aa).

ATP contacts are provided by residues Gly9–Ser16 and Met35. The interaction with target base in tRNA stretch occupies residues Asn95–Asp97. Cys100 functions as the Nucleophile in the catalytic mechanism. Cysteines 100 and 198 form a disulfide. Position 124 (Gly124) interacts with ATP. The interaction with tRNA stretch occupies residues Lys148–Gln150. Cys198 serves as the catalytic Cysteine persulfide intermediate. Residues Arg325–Tyr326 form an interaction with tRNA region.

The protein belongs to the MnmA/TRMU family.

Its subcellular location is the cytoplasm. It carries out the reaction S-sulfanyl-L-cysteinyl-[protein] + uridine(34) in tRNA + AH2 + ATP = 2-thiouridine(34) in tRNA + L-cysteinyl-[protein] + A + AMP + diphosphate + H(+). In terms of biological role, catalyzes the 2-thiolation of uridine at the wobble position (U34) of tRNA, leading to the formation of s(2)U34. The polypeptide is tRNA-specific 2-thiouridylase MnmA (Acidovorax sp. (strain JS42)).